The sequence spans 242 residues: 3-oxoacyl-[acyl-carrier-protein] reductase FabG (242 aa).

NADP(+)-binding positions include 10–13 (GSTR), threonine 35, 57–58 (NV), and asparagine 84. Residue serine 136 coordinates substrate. The active-site Proton acceptor is the tyrosine 149. Residues 149-153 (YCAAK) and isoleucine 182 contribute to the NADP(+) site.

The protein belongs to the short-chain dehydrogenases/reductases (SDR) family. In terms of assembly, homotetramer.

It carries out the reaction a (3R)-hydroxyacyl-[ACP] + NADP(+) = a 3-oxoacyl-[ACP] + NADPH + H(+). It participates in lipid metabolism; fatty acid biosynthesis. Catalyzes the NADPH-dependent reduction of beta-ketoacyl-ACP substrates to beta-hydroxyacyl-ACP products, the first reductive step in the elongation cycle of fatty acid biosynthesis. This Haemophilus influenzae (strain ATCC 51907 / DSM 11121 / KW20 / Rd) protein is 3-oxoacyl-[acyl-carrier-protein] reductase FabG (fabG).